The sequence spans 420 residues: RING finger protein 39 (420 aa).

Residues 88–135 form an RING-type zinc finger; that stretch reads CPLCGGSFEDPVLLACEHSFCRACLARRWGTPPATGTEASPTACPCCG. One can recognise a B30.2/SPRY domain in the interval 210–420; that stretch reads DDLPEDYPVV…APLRIVPAES (211 aa). A disordered region spans residues 246–265; that stretch reads DRRSVQLAPPGTPAPPDGPK.

The protein resides in the cytoplasm. The catalysed reaction is S-ubiquitinyl-[E2 ubiquitin-conjugating enzyme]-L-cysteine + [acceptor protein]-L-lysine = [E2 ubiquitin-conjugating enzyme]-L-cysteine + N(6)-ubiquitinyl-[acceptor protein]-L-lysine.. The protein operates within protein modification; protein ubiquitination. Its function is as follows. Plays an inhibitory role in anti-RNA viral innate immunity by targeting the adapter DDX3X and promoting its 'Lys-48'-linked polyubiquitination. Alternatively, enhances the cGAS-STING pathway activation by promoting 'Lys-63'-linked ubiquitination of STING1, facilitating the STING1-TBK1 complex formation and STING1 activation. The sequence is that of RING finger protein 39 (RNF39) from Pan troglodytes (Chimpanzee).